Consider the following 652-residue polypeptide: Acetyl-coenzyme A synthetase (652 aa).

CoA is bound by residues 191 to 194, Thr311, and Asn335; that span reads RAGR. ATP is bound by residues 387–389, 411–416, Asp500, and Arg515; these read GEP and DTWWQT. CoA is bound at residue Ser523. Arg526 is an ATP binding site. Mg(2+)-binding residues include Val537, His539, and Ile542. Arg584 contributes to the CoA binding site. Residue Lys609 is modified to N6-acetyllysine.

The protein belongs to the ATP-dependent AMP-binding enzyme family. Mg(2+) serves as cofactor. Post-translationally, acetylated. Deacetylation by the SIR2-homolog deacetylase activates the enzyme.

It catalyses the reaction acetate + ATP + CoA = acetyl-CoA + AMP + diphosphate. In terms of biological role, catalyzes the conversion of acetate into acetyl-CoA (AcCoA), an essential intermediate at the junction of anabolic and catabolic pathways. Acs undergoes a two-step reaction. In the first half reaction, Acs combines acetate with ATP to form acetyl-adenylate (AcAMP) intermediate. In the second half reaction, it can then transfer the acetyl group from AcAMP to the sulfhydryl group of CoA, forming the product AcCoA. Enables the cell to use acetate during aerobic growth to generate energy via the TCA cycle, and biosynthetic compounds via the glyoxylate shunt. Acetylates CheY, the response regulator involved in flagellar movement and chemotaxis. The chain is Acetyl-coenzyme A synthetase from Yersinia pestis.